The following is a 27-amino-acid chain: MWGLNRWLTFTMLILLITSHCCYWNKR.

This is an uncharacterized protein from Saccharomyces cerevisiae (strain ATCC 204508 / S288c) (Baker's yeast).